Consider the following 849-residue polypeptide: Villin-1 (849 aa).

Gelsolin-like repeat units lie at residues 30–107 (IEKS…DKFL), 147–213 (RVTE…EDGK), 262–335 (VPVE…TVEF), 405–475 (QEQL…PEMF), and 527–566 (AIQV…DHNL). Positions 739–849 (ETPERSLRKS…AVATGTPRRR (111 aa)) are disordered. 2 stretches are compositionally biased toward low complexity: residues 747-782 (KSSS…SAST) and 791-823 (PAAL…STPS).

It belongs to the villin/gelsolin family. In terms of tissue distribution, expressed in roots, young leaves, and inflorescences, mostly in the vasculature of roots, leaves, and filaments of the anthers. Also detected in guard cells.

Its subcellular location is the cytoplasm. The protein localises to the cytoskeleton. In terms of biological role, ca(2+)-independent actin-binding protein. Binds actin microfilaments (MFs). Involved in actin filament bundling, severing and capping. Caps the barbed end of actin filaments and protects them from disassembly. Promotes VLN3-mediated MF severing. This Oryza sativa subsp. japonica (Rice) protein is Villin-1.